A 327-amino-acid polypeptide reads, in one-letter code: Zinc transport protein ZntB (327 aa).

Topologically, residues 1–271 are cytoplasmic; it reads MESFAGKELQ…AMNRRTYTMS (271 aa). The chain crosses the membrane as a helical span at residues 272-292; the sequence is LLAMVFLPTTFLTGLFGVNLG. Topologically, residues 293–300 are periplasmic; the sequence is GIPGGDAP. A helical membrane pass occupies residues 301 to 321; that stretch reads FGFFTFCLMLVILVGGVAWWL. Residues 322 to 327 lie on the Cytoplasmic side of the membrane; sequence KRSKWL.

It belongs to the CorA metal ion transporter (MIT) (TC 1.A.35) family.

It is found in the cell inner membrane. The enzyme catalyses Zn(2+)(out) + H(+)(out) = Zn(2+)(in) + H(+)(in). Functionally, zinc transporter. Acts as a Zn(2+):proton symporter, which likely mediates zinc ion uptake. This chain is Zinc transport protein ZntB, found in Pectobacterium carotovorum subsp. carotovorum (strain PC1).